The chain runs to 314 residues: tRNA pseudouridine synthase B (314 aa).

H43 is a binding site for substrate. Residue D48 is the Nucleophile of the active site. Substrate is bound by residues Y76, Y179, and L200.

This sequence belongs to the pseudouridine synthase TruB family. Type 1 subfamily.

It carries out the reaction uridine(55) in tRNA = pseudouridine(55) in tRNA. Functionally, responsible for synthesis of pseudouridine from uracil-55 in the psi GC loop of transfer RNAs. This is tRNA pseudouridine synthase B from Escherichia coli O157:H7.